The chain runs to 209 residues: Large ribosomal subunit protein uL3 (209 aa).

The disordered stretch occupies residues 126-148 (HGQSRGPMAHGSRYHRRPGSMGP).

Belongs to the universal ribosomal protein uL3 family. As to quaternary structure, part of the 50S ribosomal subunit. Forms a cluster with proteins L14 and L19.

Its function is as follows. One of the primary rRNA binding proteins, it binds directly near the 3'-end of the 23S rRNA, where it nucleates assembly of the 50S subunit. This Listeria innocua serovar 6a (strain ATCC BAA-680 / CLIP 11262) protein is Large ribosomal subunit protein uL3.